We begin with the raw amino-acid sequence, 308 residues long: Methionyl-tRNA formyltransferase (308 aa).

Ser110–Pro113 is a binding site for (6S)-5,6,7,8-tetrahydrofolate.

The protein belongs to the Fmt family.

The enzyme catalyses L-methionyl-tRNA(fMet) + (6R)-10-formyltetrahydrofolate = N-formyl-L-methionyl-tRNA(fMet) + (6S)-5,6,7,8-tetrahydrofolate + H(+). Functionally, attaches a formyl group to the free amino group of methionyl-tRNA(fMet). The formyl group appears to play a dual role in the initiator identity of N-formylmethionyl-tRNA by promoting its recognition by IF2 and preventing the misappropriation of this tRNA by the elongation apparatus. The sequence is that of Methionyl-tRNA formyltransferase from Neisseria meningitidis serogroup B (strain ATCC BAA-335 / MC58).